We begin with the raw amino-acid sequence, 170 residues long: Acetyl-CoA decarbonylase/synthase complex subunit epsilon 2 (170 aa).

It belongs to the CdhB family. In terms of assembly, heterotetramer of two alpha and two epsilon subunits. The ACDS complex is made up of alpha, epsilon, beta, gamma and delta subunits with a probable stoichiometry of (alpha(2)epsilon(2))(4)-beta(8)-(gamma(1)delta(1))(8).

The protein operates within one-carbon metabolism; methanogenesis from acetate. Functionally, part of a complex that catalyzes the reversible cleavage of acetyl-CoA, allowing growth on acetate as sole source of carbon and energy. The alpha-epsilon subcomponent functions as a carbon monoxide dehydrogenase. The precise role of the epsilon subunit is unclear; it may have a stabilizing role within the alpha(2)epsilon(2) component and/or be involved in electron transfer to FAD during a potential FAD-mediated CO oxidation. This is Acetyl-CoA decarbonylase/synthase complex subunit epsilon 2 (cdhB2) from Methanosarcina thermophila.